We begin with the raw amino-acid sequence, 364 residues long: Chorismate synthase (364 aa).

Arg48 lines the NADP(+) pocket. FMN-binding positions include 131-133, 243-244, Gly288, 303-307, and Arg329; these read RSS, NA, and KPTSS.

Belongs to the chorismate synthase family. In terms of assembly, homotetramer. FMNH2 serves as cofactor.

The enzyme catalyses 5-O-(1-carboxyvinyl)-3-phosphoshikimate = chorismate + phosphate. It functions in the pathway metabolic intermediate biosynthesis; chorismate biosynthesis; chorismate from D-erythrose 4-phosphate and phosphoenolpyruvate: step 7/7. Functionally, catalyzes the anti-1,4-elimination of the C-3 phosphate and the C-6 proR hydrogen from 5-enolpyruvylshikimate-3-phosphate (EPSP) to yield chorismate, which is the branch point compound that serves as the starting substrate for the three terminal pathways of aromatic amino acid biosynthesis. This reaction introduces a second double bond into the aromatic ring system. This chain is Chorismate synthase, found in Brucella abortus (strain S19).